Reading from the N-terminus, the 461-residue chain is Calcitonin gene-related peptide type 1 receptor (461 aa).

Residues 1–22 form the signal peptide; it reads MEKKCTLYFLVLLPFFMILVTA. Over 23–139 the chain is Extracellular; the sequence is ELEESPEDSI…NTHEKVKTAL (117 aa). Intrachain disulfides connect C48/C74, C65/C105, and C88/C127. Residues N66, N118, and N123 are each glycosylated (N-linked (GlcNAc...) asparagine). Residues 140-164 traverse the membrane as a helical segment; the sequence is NLFYLTIIGHGLSIASLLISLGIFF. Residues 165-175 are Cytoplasmic-facing; sequence YFKSLSCQRIT. The helical transmembrane segment at 176-198 threads the bilayer; that stretch reads LHKNLFFSFVCNSVVTIIHLTAV. The Extracellular segment spans residues 199–209; the sequence is ANNQALVATNP. The helical transmembrane segment at 210–238 threads the bilayer; sequence VSCKVSQFIHLYLMGCNYFWMLCEGIYLH. Residues 239–252 are Cytoplasmic-facing; it reads TLIVVAVFAEKQHL. Residues 253–273 traverse the membrane as a helical segment; sequence MWYYFLGWGFPLIPACIHAIA. Over 274–289 the chain is Extracellular; the sequence is RSLYYNDNCWISSDTH. The segment at 288 to 289 is required for RAMP3 interaction; it reads TH. A helical transmembrane segment spans residues 290–314; sequence LLYIIHGPICAALLVNLFFLLNIVR. At 315 to 329 the chain is on the cytoplasmic side; it reads VLITKLKVTHQAESN. Residues 330 to 351 form a helical membrane-spanning segment; that stretch reads LYMKAVRATLILVPLLGIEFVL. At 352-366 the chain is on the extracellular side; it reads IPWRPEGKIAEEVYD. A helical transmembrane segment spans residues 367–387; sequence YIMHILMHFQGLLVSTIFCFF. Residues S420 and S445 each carry the phosphoserine modification.

This sequence belongs to the G-protein coupled receptor 2 family. In terms of assembly, heterodimer of CALCRL and RAMP1; the receptor complex functions as CGRP receptor. Heterodimer of CALCRL and RAMP2 or CALCRL and RAMP3; the complexes function as adrenomedullin receptor. As to expression, predominantly expressed in the lung and heart.

It localises to the cell membrane. G protein-coupled receptor which specificity is determined by its interaction with receptor-activity-modifying proteins (RAMPs). Together with RAMP1, form the receptor complex for calcitonin-gene-related peptides CALCA/CGRP1 and CALCB/CGRP2. Together with RAMP2 or RAMP3, function as receptor complexes for adrenomedullin (ADM and ADM2). Ligand binding causes a conformation change that triggers signaling via guanine nucleotide-binding proteins (G proteins) and modulates the activity of downstream effectors. Activates cAMP-dependent pathway. The sequence is that of Calcitonin gene-related peptide type 1 receptor from Homo sapiens (Human).